We begin with the raw amino-acid sequence, 266 residues long: Cell division protein FtsQ (266 aa).

Over 1-31 (MRQKTSSNKKKQKNTNNISLRRKLGLMYKKA) the chain is Cytoplasmic. A helical transmembrane segment spans residues 32 to 52 (ILGLKIVLMIFVCLFVFTKYF). The Periplasmic portion of the chain corresponds to 53-266 (TSIKTYLITN…DRNKYYIQKY (214 aa)). The region spanning 72-140 (FRLENVIIEG…NTVYIKLFER (69 aa)) is the POTRA domain.

The protein belongs to the FtsQ/DivIB family. FtsQ subfamily.

It is found in the cell inner membrane. In terms of biological role, essential cell division protein. The polypeptide is Cell division protein FtsQ (Rickettsia typhi (strain ATCC VR-144 / Wilmington)).